Consider the following 308-residue polypeptide: Ribosomal RNA small subunit methyltransferase H (308 aa).

Residues 32–34 (AGH), aspartate 52, phenylalanine 79, aspartate 100, and glutamine 107 contribute to the S-adenosyl-L-methionine site.

The protein belongs to the methyltransferase superfamily. RsmH family.

The protein resides in the cytoplasm. The enzyme catalyses cytidine(1402) in 16S rRNA + S-adenosyl-L-methionine = N(4)-methylcytidine(1402) in 16S rRNA + S-adenosyl-L-homocysteine + H(+). Its function is as follows. Specifically methylates the N4 position of cytidine in position 1402 (C1402) of 16S rRNA. The polypeptide is Ribosomal RNA small subunit methyltransferase H (Mycoplasma mycoides subsp. mycoides SC (strain CCUG 32753 / NCTC 10114 / PG1)).